Here is a 368-residue protein sequence, read N- to C-terminus: Spermidine/putrescine import ATP-binding protein PotA (368 aa).

One can recognise an ABC transporter domain in the interval 6 to 236; it reads VSIKNVSKFF…PVNVFAATFI (231 aa). ATP is bound at residue 38–45; it reads GPSGCGKT.

This sequence belongs to the ABC transporter superfamily. Spermidine/putrescine importer (TC 3.A.1.11.1) family. The complex is composed of two ATP-binding proteins (PotA), two transmembrane proteins (PotB and PotC) and a solute-binding protein (PotD).

The protein resides in the cell inner membrane. The catalysed reaction is ATP + H2O + polyamine-[polyamine-binding protein]Side 1 = ADP + phosphate + polyamineSide 2 + [polyamine-binding protein]Side 1.. Functionally, part of the ABC transporter complex PotABCD involved in spermidine/putrescine import. Responsible for energy coupling to the transport system. This is Spermidine/putrescine import ATP-binding protein PotA from Thermotoga maritima (strain ATCC 43589 / DSM 3109 / JCM 10099 / NBRC 100826 / MSB8).